The sequence spans 292 residues: Diaminopimelate epimerase (292 aa).

Substrate is bound by residues N13, Q46, and N66. The Proton donor role is filled by C75. Residues 76–77 (GN), N170, N203, and 221–222 (ER) each bind substrate. The active-site Proton acceptor is the C230. 231 to 232 (GT) lines the substrate pocket.

It belongs to the diaminopimelate epimerase family. Homodimer.

It localises to the cytoplasm. It carries out the reaction (2S,6S)-2,6-diaminopimelate = meso-2,6-diaminopimelate. The protein operates within amino-acid biosynthesis; L-lysine biosynthesis via DAP pathway; DL-2,6-diaminopimelate from LL-2,6-diaminopimelate: step 1/1. Its function is as follows. Catalyzes the stereoinversion of LL-2,6-diaminopimelate (L,L-DAP) to meso-diaminopimelate (meso-DAP), a precursor of L-lysine and an essential component of the bacterial peptidoglycan. This Acidovorax ebreus (strain TPSY) (Diaphorobacter sp. (strain TPSY)) protein is Diaminopimelate epimerase.